Reading from the N-terminus, the 95-residue chain is Large ribosomal subunit protein bL27 (95 aa).

Residues 1–9 (MLKMNLQFF) constitute a propeptide that is removed on maturation.

Belongs to the bacterial ribosomal protein bL27 family. In terms of processing, the N-terminus is cleaved by ribosomal processing cysteine protease Prp.

This Lachnoclostridium phytofermentans (strain ATCC 700394 / DSM 18823 / ISDg) (Clostridium phytofermentans) protein is Large ribosomal subunit protein bL27.